Reading from the N-terminus, the 260-residue chain is Thiazole synthase (260 aa).

Catalysis depends on Lys-96, which acts as the Schiff-base intermediate with DXP. 1-deoxy-D-xylulose 5-phosphate is bound by residues Gly-157, 184–185 (AG), and 206–207 (NT).

Belongs to the ThiG family. In terms of assembly, homotetramer. Forms heterodimers with either ThiH or ThiS.

The protein localises to the cytoplasm. The catalysed reaction is [ThiS sulfur-carrier protein]-C-terminal-Gly-aminoethanethioate + 2-iminoacetate + 1-deoxy-D-xylulose 5-phosphate = [ThiS sulfur-carrier protein]-C-terminal Gly-Gly + 2-[(2R,5Z)-2-carboxy-4-methylthiazol-5(2H)-ylidene]ethyl phosphate + 2 H2O + H(+). The protein operates within cofactor biosynthesis; thiamine diphosphate biosynthesis. Its function is as follows. Catalyzes the rearrangement of 1-deoxy-D-xylulose 5-phosphate (DXP) to produce the thiazole phosphate moiety of thiamine. Sulfur is provided by the thiocarboxylate moiety of the carrier protein ThiS. In vitro, sulfur can be provided by H(2)S. The sequence is that of Thiazole synthase from Rhodopseudomonas palustris (strain HaA2).